Consider the following 578-residue polypeptide: Hemolysin 4 (578 aa).

The interval 289–322 is disordered; the sequence is KDGPKASWRRRPSSASSVTMPTTPRIIGSNARPE. The region spanning 448-539 is the Ricin B-type lectin domain; sequence RPVNLQLGGF…LSNLSAHQLL (92 aa).

Belongs to the HlyA hemolysin family.

Bacterial hemolysins are exotoxins that attack blood cell membranes and cause cell rupture by mechanisms not clearly defined. The sequence is that of Hemolysin 4 (ash4) from Aeromonas salmonicida.